A 555-amino-acid chain; its full sequence is Glutamine--tRNA ligase (555 aa).

The 'HIGH' region signature appears at 34–44; the sequence is PEPNGYLHIGH. Residues 35–37 and 41–47 each bind ATP; these read EPN and HIGHAKS. Positions 67 and 212 each coordinate L-glutamine. ATP is bound by residues T231, 261–262, and 269–271; these read RL and MSK. Positions 268 to 272 match the 'KMSKS' region motif; it reads VMSKR. The tract at residues 317–324 is interaction with tRNA; that stretch reads TKQDNTIE.

This sequence belongs to the class-I aminoacyl-tRNA synthetase family. As to quaternary structure, monomer.

It is found in the cytoplasm. The catalysed reaction is tRNA(Gln) + L-glutamine + ATP = L-glutaminyl-tRNA(Gln) + AMP + diphosphate. This Salmonella paratyphi B (strain ATCC BAA-1250 / SPB7) protein is Glutamine--tRNA ligase.